Consider the following 1339-residue polypeptide: Astrotactin-2 (1339 aa).

An N-terminal signal peptide occupies residues 1 to 49; the sequence is MAAAGARLSPGPGSGLRGRPRLCFHPGPPPLLPLLLLFLLLLPPPPLLA. Residues 50 to 206 lie on the Lumenal side of the membrane; that stretch reads GATAAASREP…IVEEQMHILH (157 aa). N-linked (GlcNAc...) asparagine glycosylation occurs at asparagine 168. The chain crosses the membrane as a helical span at residues 207-227; the sequence is ISVMGGLIALLLLLLVFTVAL. Over 228 to 434 the chain is Cytoplasmic; it reads YAQRRWQKRR…KGLLKSPVNK (207 aa). Disordered stretches follow at residues 296-316 and 363-408; these read EEDEEPPRRANHVSREDEFGS and TPIE…ADDE. Residues 435 to 455 traverse the membrane as a helical segment; sequence TALTLIAVSSCILAMVCGSQM. Residues 456–1339 are Lumenal-facing; it reads SCPLTVKVTL…RNTYGESKGR (884 aa). EGF-like domains are found at residues 510–550, 651–695, and 699–751; these read VRDL…HLCV, PVRD…SGCY, and KGID…KSCL. 9 disulfides stabilise this stretch: cysteine 514–cysteine 526, cysteine 522–cysteine 533, cysteine 535–cysteine 549, cysteine 655–cysteine 668, cysteine 662–cysteine 679, cysteine 681–cysteine 694, cysteine 703–cysteine 715, cysteine 711–cysteine 735, and cysteine 737–cysteine 750. Asparagine 770 and asparagine 783 each carry an N-linked (GlcNAc...) asparagine glycan. Cystine bridges form between cysteine 825/cysteine 987, cysteine 916/cysteine 977, and cysteine 983/cysteine 990. Asparagine 1020 carries an N-linked (GlcNAc...) asparagine glycan. 5 disulfide bridges follow: cysteine 1036–cysteine 1047, cysteine 1049–cysteine 1062, cysteine 1136–cysteine 1158, cysteine 1190–cysteine 1277, and cysteine 1298–cysteine 1321. The Fibronectin type-III domain occupies 1065–1188; it reads LLQPVLRLSP…SELSTVTLRT (124 aa).

The protein belongs to the astrotactin family. As to quaternary structure, interacts with ASTN1; the interaction is not calcium-dependent.

The protein localises to the membrane. The protein resides in the perikaryon. It localises to the cytoplasm. It is found in the cell cortex. Its subcellular location is the early endosome. The protein localises to the late endosome. The protein resides in the cytoplasmic vesicle. It localises to the clathrin-coated vesicle. Functionally, mediates recycling of the neuronal cell adhesion molecule ASTN1 to the anterior pole of the cell membrane in migrating neurons. Promotes ASTN1 internalization and intracellular transport of endocytosed ASTN1. Selectively binds inositol-4,5-bisphosphate, inositol-3,4,5-trisphosphate and inositol-1,3,4,5-tetrakisphosphate, suggesting it is recruited to membranes that contain lipids with a phosphoinositide headgroup. In Homo sapiens (Human), this protein is Astrotactin-2 (ASTN2).